Consider the following 461-residue polypeptide: Dihydrofolate reductase (461 aa).

The DHFR domain occupies 233-447 (DLTMIVAVSS…VEIEFELYGK (215 aa)). NADP(+) contacts are provided by residues Ala239 and 246-252 (GIGKKNS). 260–265 (EMAYFA) is a substrate binding site. 292-294 (RSC) contacts NADP(+). Residue Arg308 coordinates substrate. Residues 314–316 (TRN) and 365–372 (GGSFLYGS) contribute to the NADP(+) site.

This sequence belongs to the dihydrofolate reductase family.

It carries out the reaction (6S)-5,6,7,8-tetrahydrofolate + NADP(+) = 7,8-dihydrofolate + NADPH + H(+). It participates in cofactor biosynthesis; tetrahydrofolate biosynthesis; 5,6,7,8-tetrahydrofolate from 7,8-dihydrofolate: step 1/1. Functionally, key enzyme in folate metabolism. Catalyzes an essential reaction for de novo glycine and purine synthesis, and for DNA precursor synthesis. The protein is Dihydrofolate reductase (dfr1) of Schizosaccharomyces pombe (strain 972 / ATCC 24843) (Fission yeast).